The primary structure comprises 342 residues: tRNA N6-adenosine threonylcarbamoyltransferase (342 aa).

Fe cation contacts are provided by His115 and His119. Substrate-binding positions include 138-142, Asp171, Gly184, and Asn276; that span reads LVSGG. Asp304 is a Fe cation binding site.

The protein belongs to the KAE1 / TsaD family. Requires Fe(2+) as cofactor.

It is found in the cytoplasm. The catalysed reaction is L-threonylcarbamoyladenylate + adenosine(37) in tRNA = N(6)-L-threonylcarbamoyladenosine(37) in tRNA + AMP + H(+). In terms of biological role, required for the formation of a threonylcarbamoyl group on adenosine at position 37 (t(6)A37) in tRNAs that read codons beginning with adenine. Is involved in the transfer of the threonylcarbamoyl moiety of threonylcarbamoyl-AMP (TC-AMP) to the N6 group of A37, together with TsaE and TsaB. TsaD likely plays a direct catalytic role in this reaction. This chain is tRNA N6-adenosine threonylcarbamoyltransferase, found in Dichelobacter nodosus (strain VCS1703A).